The sequence spans 2615 residues: Collagen alpha-5(VI) chain (2615 aa).

Positions 1–18 (MKILLIIFVLIIWTETLA) are cleaved as a signal peptide. A nonhelical region region spans residues 19 to 1394 (DQSPGPGPVY…TCCCTFCKCP (1376 aa)). VWFA domains follow at residues 30 to 209 (DVVF…IKDV), 236 to 413 (DLVF…LKKL), 442 to 612 (DIHF…KNEV), 628 to 797 (DIMF…ERKL), 814 to 987 (DVVF…FTLV), 1005 to 1178 (DVIF…KKRI), and 1194 to 1376 (DIVV…KLSQ). 2 N-linked (GlcNAc...) asparagine glycosylation sites follow: Asn-201 and Asn-260. Asn-835 carries N-linked (GlcNAc...) asparagine glycosylation. 6 Collagen-like domains span residues 1395–1446 (GIPG…GCPG), 1434–1490 (GPQG…KGDP), 1464–1520 (GDDG…PGQN), 1524–1580 (KGQK…TLGA), 1579–1629 (GAEG…LGKK), and 1674–1729 (GDAG…MAGQ). Residues 1395 to 1728 (GIPGPHGTRG…GQRGIKGMAG (334 aa)) are triple-helical region. A disordered region spans residues 1404–1693 (GLQAMKGSQG…NPGIPGGPGP (290 aa)). The Cell attachment site motif lies at 1430–1432 (RGD). A compositionally biased stretch (low complexity) spans 1511–1522 (PGDPGNPGQNNN). 2 stretches are compositionally biased toward low complexity: residues 1601–1611 (SQGQKGPQGSP) and 1622–1641 (RPGL…LGPV). Positions 1729-2615 (QPVYSQCDLI…EDKEMEATDI (887 aa)) are nonhelical region. VWFA domains lie at 1758-1965 (ELVF…MDVV), 1963-2154 (DVVF…AKFL), and 2291-2487 (DVAF…VKPF). Residue Asn-2509 is glycosylated (N-linked (GlcNAc...) asparagine).

Belongs to the type VI collagen family. In terms of assembly, trimers composed of three different chains: alpha-1(VI), alpha-2(VI), and alpha-3(VI) or alpha-5(VI) or alpha-6(VI). Prolines at the third position of the tripeptide repeating unit (G-X-Y) are hydroxylated in some or all of the chains. As to expression, expressed in skin, followed by lung, small intestine, colon and testis. In skin, it is expressed in the epidermis with strongest staining in suprabasal viable layers. In ATOD patients, it is absent in the most differentiated upper spinous and granular layers (at protein level).

Its subcellular location is the secreted. The protein localises to the extracellular space. The protein resides in the extracellular matrix. Collagen VI acts as a cell-binding protein. This is Collagen alpha-5(VI) chain (COL6A5) from Homo sapiens (Human).